An 85-amino-acid chain; its full sequence is ATP synthase subunit c (85 aa).

Transmembrane regions (helical) follow at residues 1 to 21 (MLAW…ALVG) and 53 to 73 (LLFA…VALI).

Belongs to the ATPase C chain family. As to quaternary structure, F-type ATPases have 2 components, F(1) - the catalytic core - and F(0) - the membrane proton channel. F(1) has five subunits: alpha(3), beta(3), gamma(1), delta(1), epsilon(1). F(0) has three main subunits: a(1), b(2) and c(10-14). The alpha and beta chains form an alternating ring which encloses part of the gamma chain. F(1) is attached to F(0) by a central stalk formed by the gamma and epsilon chains, while a peripheral stalk is formed by the delta and b chains.

It is found in the cell inner membrane. F(1)F(0) ATP synthase produces ATP from ADP in the presence of a proton or sodium gradient. F-type ATPases consist of two structural domains, F(1) containing the extramembraneous catalytic core and F(0) containing the membrane proton channel, linked together by a central stalk and a peripheral stalk. During catalysis, ATP synthesis in the catalytic domain of F(1) is coupled via a rotary mechanism of the central stalk subunits to proton translocation. Its function is as follows. Key component of the F(0) channel; it plays a direct role in translocation across the membrane. A homomeric c-ring of between 10-14 subunits forms the central stalk rotor element with the F(1) delta and epsilon subunits. The chain is ATP synthase subunit c from Dictyoglomus turgidum (strain DSM 6724 / Z-1310).